The chain runs to 188 residues: Large ribosomal subunit protein uL5 (188 aa).

The protein belongs to the universal ribosomal protein uL5 family. In terms of assembly, part of the 50S ribosomal subunit; part of the 5S rRNA/L5/L18/L25 subcomplex. Contacts the 5S rRNA and the P site tRNA. Forms a bridge to the 30S subunit in the 70S ribosome.

Its function is as follows. This is one of the proteins that bind and probably mediate the attachment of the 5S RNA into the large ribosomal subunit, where it forms part of the central protuberance. In the 70S ribosome it contacts protein S13 of the 30S subunit (bridge B1b), connecting the 2 subunits; this bridge is implicated in subunit movement. Contacts the P site tRNA; the 5S rRNA and some of its associated proteins might help stabilize positioning of ribosome-bound tRNAs. The protein is Large ribosomal subunit protein uL5 of Aquifex pyrophilus.